The following is a 376-amino-acid chain: Methylthioribose-1-phosphate isomerase (376 aa).

Aspartate 256 serves as the catalytic Proton donor.

Belongs to the eIF-2B alpha/beta/delta subunits family. MtnA subfamily.

It is found in the cytoplasm. Its subcellular location is the nucleus. It catalyses the reaction 5-(methylsulfanyl)-alpha-D-ribose 1-phosphate = 5-(methylsulfanyl)-D-ribulose 1-phosphate. It participates in amino-acid biosynthesis; L-methionine biosynthesis via salvage pathway; L-methionine from S-methyl-5-thio-alpha-D-ribose 1-phosphate: step 1/6. In terms of biological role, catalyzes the interconversion of methylthioribose-1-phosphate (MTR-1-P) into methylthioribulose-1-phosphate (MTRu-1-P). This Vitis vinifera (Grape) protein is Methylthioribose-1-phosphate isomerase.